Consider the following 682-residue polypeptide: Connectin (682 aa).

The signal sequence occupies residues 1–24 (MATLADSAICFLLLSLLLIGACLV). The segment at 29 to 54 (GRAKDDRRTRGRGSSSGVLSSSSSSS) is disordered. Residues 40-54 (RGSSSGVLSSSSSSS) are compositionally biased toward low complexity. 11 LRR repeats span residues 149–172 (LRELKFVIQNNARLDYIPTMIIEP), 173–196 (LKNLSSIVIEYSQVEIVKSYAFAN), 199–220 (FLERIILNNNHIMALDQDAFAN), 223–244 (RLRELNLEHNQIFEMDRYAFRN), 247–268 (LCERLFLNNNNISTLHEGLFAD), 271–292 (RLTFLNLAHNQINVLTSEIFRG), 295–316 (NLNVLKLTRNNLNFIGDTVFAE), 319–342 (SLSELELDDNRIERISERALDGLN), 343–364 (TLKTLNLRNNLLKKIDNGLLRG), 367–388 (ALLSINVQANKLETLTFYTFQP), and 389–404 (IMDNLVNSTSELLVSD). One can recognise an LRRCT domain in the interval 405–462 (NKFICDCRLQWIFELKNRTRHLQLRDSLEDLHCTLQEPKLSHFVDPVPPTILDVLNIG). The segment at 503-536 (RQALRGQRQFASSAENVVESKMRRRRKRQEEVKE) is disordered. Ala-658 carries GPI-anchor amidated alanine lipidation. Positions 659–682 (GANSLAQGMTIIVSLVALMMISRG) are cleaved as a propeptide — removed in mature form.

Predominantly expressed in abdominal and thoracic segment muscle and motorneuron cells.

Its subcellular location is the cell membrane. Cell adhesion protein involved in target recognition during neuromuscular development. Mediates homophilic cellular adhesion. This chain is Connectin (Con), found in Drosophila melanogaster (Fruit fly).